The following is a 59-amino-acid chain: UPF0434 protein COSY_0767 (59 aa).

Belongs to the UPF0434 family.

In Vesicomyosocius okutanii subsp. Calyptogena okutanii (strain HA), this protein is UPF0434 protein COSY_0767.